The primary structure comprises 812 residues: MNPERSERIEIPVLPLRDVVVYPHMVIPLFVGREKSIRCLEAAMDHDKKIMLVAQKEASTDEPGVNDLFTVGTVASILQMLKLPDGTVKVLVEGLQRARISALSDNGEHFSAKAEYLESPTIDEREQEVLVRTAISQFEGYIKLNKKIPPEVLTSLNSIDDPARLADTIAAHMPLKLADKQSVLEMSDVNERLEYLMAMMESEIDLLQVEKRIRNRVKKQMEKSQREYYLNEQMKAIQKELGEMDDAPDENEALKRKIDAAKMPKEAKEKAEAELQKLKMMSPMSAEATVVRGYIDWMVQVPWNARSKVKKDLRQAQEILDTDHYGLERVKDRILEYLAVQSRVNKIKGPILCLVGPPGVGKTSLGQSIAKATGRKYVRMALGGVRDEAEIRGHRRTYIGSMPGKLIQKMAKVGVKNPLFLLDEIDKMSSDMRGDPASALLEVLDPEQNVAFSDHYLEVDYDLSDVMFVATSNSMNIPAPLLDRMEVIRLSGYTEDEKLNIAKRHLLPKQIERNALKKGELTVDDSAIIGIIRYYTREAGVRGLEREISKLCRKAVKQLLLDKSLKHIEINGDNLHDYLGVQRFDYGRADNENRVGQVTGLAWTEVGGDLLTIETACVPGKGKLTYTGSLGEVMQESIQAALTVVRARAEKLGINPDFYEKRDIHVHVPEGATPKDGPSAGIAMCTALVSCLTGNPVRADVAMTGEITLRGQVLPIGGLKEKLLAAHRGGIKTVLIPFENKRDLKENPDNAKADQDRHPVKNNEEEQTLSLQNYPSVFLFFFFFFFEAIEAFNRFTAAGLKIACPAAILSLN.

A Lon N-terminal domain is found at Ile11 to Ile204. Gly356–Thr363 serves as a coordination point for ATP. The region spanning Glu592 to Asn773 is the Lon proteolytic domain. Active-site residues include Ser679 and Lys722. Residues Lys745–Glu764 show a composition bias toward basic and acidic residues. The interval Lys745–Glu766 is disordered.

Belongs to the peptidase S16 family. In terms of assembly, homohexamer. Organized in a ring with a central cavity. ATP binding and hydrolysis do not affect the oligomeric state of the enzyme.

Its subcellular location is the cytoplasm. The catalysed reaction is Hydrolysis of proteins in presence of ATP.. Its activity is regulated as follows. Contains an allosteric site (distinct from its active site), whose occupancy by an unfolded polypeptide leads to enzyme activation. In terms of biological role, ATP-dependent serine protease that mediates the selective degradation of mutant and abnormal proteins as well as certain short-lived regulatory proteins. Required for cellular homeostasis and for survival from DNA damage and developmental changes induced by stress. Degrades polypeptides processively to yield small peptide fragments that are 5 to 10 amino acids long. Binds to DNA in a double-stranded, site-specific manner. Endogenous substrates include the regulatory proteins RcsA and SulA, the transcriptional activator SoxS, and UmuD. Its overproduction specifically inhibits translation through at least two different pathways, one of them being the YoeB-YefM toxin-antitoxin system. This is Lon protease from Shigella dysenteriae serotype 1 (strain Sd197).